The sequence spans 264 residues: Protein GrpE (264 aa).

Positions 36-49 (KVQSKKVSSDHSSS) are enriched in basic and acidic residues. The interval 36-59 (KVQSKKVSSDHSSSEDNASSDINS) is disordered. Over residues 50 to 59 (EDNASSDINS) the composition is skewed to low complexity.

This sequence belongs to the GrpE family. In terms of assembly, homodimer.

It is found in the cytoplasm. Its function is as follows. Participates actively in the response to hyperosmotic and heat shock by preventing the aggregation of stress-denatured proteins, in association with DnaK and GrpE. It is the nucleotide exchange factor for DnaK and may function as a thermosensor. Unfolded proteins bind initially to DnaJ; upon interaction with the DnaJ-bound protein, DnaK hydrolyzes its bound ATP, resulting in the formation of a stable complex. GrpE releases ADP from DnaK; ATP binding to DnaK triggers the release of the substrate protein, thus completing the reaction cycle. Several rounds of ATP-dependent interactions between DnaJ, DnaK and GrpE are required for fully efficient folding. In Peanut witches'-broom phytoplasma, this protein is Protein GrpE.